Consider the following 228-residue polypeptide: E3 ubiquitin-protein ligase RNF114 (228 aa).

The RING-type zinc finger occupies C29–R68. Residues C91 and C94 each coordinate Zn(2+). Residues C91 to C110 form a C2HC RNF-type zinc finger. An N6-acetyllysine modification is found at K102. Zn(2+) is bound by residues H106 and C110. K112 carries the post-translational modification N6-acetyllysine.

As to quaternary structure, interacts with XAF1, the interaction increases XAF1 stability and proapoptotic effects, and may regulate IFN signaling. Autoubiquitinated. Polyubiquitinated in the presence of E2 enzymes UBE2D1, UBE2D2 and UBE2D3, but only monoubiquitinated in the presence of UBE2E1.

Its subcellular location is the cytoplasm. It is found in the nucleus. The catalysed reaction is S-ubiquitinyl-[E2 ubiquitin-conjugating enzyme]-L-cysteine + [acceptor protein]-L-lysine = [E2 ubiquitin-conjugating enzyme]-L-cysteine + N(6)-ubiquitinyl-[acceptor protein]-L-lysine.. Its pathway is protein modification; protein ubiquitination. Functionally, E3 ubiquitin-protein ligase that promotes the ubiquitination of various substrates. In turn, participates in the regulation of many biological processes including cell cycle, apoptosis, osteoclastogenesis as well as innate or adaptive immunity. Acts as negative regulator of NF-kappa-B-dependent transcription by promoting the ubiquitination and stabilization of the NF-kappa-B inhibitor TNFAIP3. May promote the ubiquitination of TRAF6 as well. Also acts as a negative regulator of T-cell activation. Inhibits cellular dsRNA responses and interferon production by targeting MAVS component for proteasomal degradation. Ubiquitinates the CDK inhibitor CDKN1A leading to its degradationand probably also CDKN1B and CDKN1C. This activity stimulates cell cycle G1-to-S phase transition and suppresses cellular senescence. May play a role in spermatogenesis. Inhibits classical swine fever virus replication by mediating 'K27'-linked ubiquitination of viral NS4B and inducing its degradation via the proteasome. The protein is E3 ubiquitin-protein ligase RNF114 (RNF114) of Sus scrofa (Pig).